Here is a 225-residue protein sequence, read N- to C-terminus: DNA-binding response regulator MtrA (225 aa).

In terms of domain architecture, Response regulatory spans 4–117; that stretch reads RILVVDDDAS…ELVARVRARL (114 aa). 4-aspartylphosphate is present on Asp-53. Positions 125–224 form a DNA-binding region, ompR/PhoB-type; that stretch reads AEMLSIADVE…VRGVGYKAGP (100 aa).

Post-translationally, phosphorylated by MtrB.

In terms of biological role, member of the two-component regulatory system MtrA/MtrB. This is DNA-binding response regulator MtrA (mtrA) from Mycolicibacterium paratuberculosis (strain ATCC BAA-968 / K-10) (Mycobacterium paratuberculosis).